The sequence spans 628 residues: tRNA uridine 5-carboxymethylaminomethyl modification enzyme MnmG (628 aa).

14–19 (GAGHAG) is an FAD binding site. 273-287 (GPRYCPSIEDKVVRF) is a binding site for NAD(+).

It belongs to the MnmG family. In terms of assembly, homodimer. Heterotetramer of two MnmE and two MnmG subunits. The cofactor is FAD.

The protein localises to the cytoplasm. Functionally, NAD-binding protein involved in the addition of a carboxymethylaminomethyl (cmnm) group at the wobble position (U34) of certain tRNAs, forming tRNA-cmnm(5)s(2)U34. This Bacillus velezensis (strain DSM 23117 / BGSC 10A6 / LMG 26770 / FZB42) (Bacillus amyloliquefaciens subsp. plantarum) protein is tRNA uridine 5-carboxymethylaminomethyl modification enzyme MnmG.